A 329-amino-acid polypeptide reads, in one-letter code: DNA-directed RNA polymerase subunit alpha (329 aa).

The segment at 1–231 (MQTTLLKPKT…EQLAVFAQLE (231 aa)) is alpha N-terminal domain (alpha-NTD). An alpha C-terminal domain (alpha-CTD) region spans residues 249–329 (FDPILLRPVD…SWPPAGLDKR (81 aa)).

This sequence belongs to the RNA polymerase alpha chain family. In terms of assembly, homodimer. The RNAP catalytic core consists of 2 alpha, 1 beta, 1 beta' and 1 omega subunit. When a sigma factor is associated with the core the holoenzyme is formed, which can initiate transcription.

It catalyses the reaction RNA(n) + a ribonucleoside 5'-triphosphate = RNA(n+1) + diphosphate. Functionally, DNA-dependent RNA polymerase catalyzes the transcription of DNA into RNA using the four ribonucleoside triphosphates as substrates. This chain is DNA-directed RNA polymerase subunit alpha, found in Variovorax paradoxus (strain S110).